We begin with the raw amino-acid sequence, 660 residues long: F-box/LRR-repeat protein 5 (660 aa).

The segment at 1 to 157 (MAPFPDEVDL…IKKKVIAQHC (157 aa)) is hemerythrin-like. Fe(3+) is bound by residues H15, H57, E58, E61, H80, H124, and E127. The 47-residue stretch at 200–246 (SASICNLPPEVMLNIFSYLNPQDLCRCSQVNTKWAQLARTGSLWRHL) folds into the F-box domain. The tract at residues 283-305 (YQEWDEDADIDESEETGEDDPSI) is disordered. Acidic residues predominate over residues 285-303 (EWDEDADIDESEETGEDDP). LRR repeat units follow at residues 311-337 (EKELLNSLVHYILPYIGHSVKTLVLAY), 338-362 (SSATSNKVIRQILEYCPNMEHLDLT), 363-389 (QTDISDSAFNGWCFGACQTLRHIDLSG), 390-417 (CEKITDSALEKLSVALGMPLAHKKRLLK), 551-576 (IRDICPGSAKLDQQVARVLQFLSLSG), 577-604 (CHQITDHGLRVLTIGGGLPNLEHLNLSG), 605-630 (CLNVTGSGLQDLVSACPSLNDEHFYY), and 631-649 (CDNISGPHAATASGCQNLQ). Positions 631, 645, 655, and 656 each coordinate [2Fe-2S] cluster.

Part of a SCF (SKP1-cullin-F-box) protein ligase complex. [2Fe-2S] cluster is required as a cofactor. In terms of processing, ubiquitinated upon iron and oxygen depletion, leading to its degradation by the proteasome. Ubiquitination is regulated by the hemerythrin-like region that acts as an oxygen and iron sensor.

It localises to the cytoplasm. The protein localises to the perinuclear region. Its subcellular location is the nucleus. Its pathway is protein modification; protein ubiquitination. Functionally, component of some SCF (SKP1-cullin-F-box) protein ligase complex that plays a central role in iron homeostasis by promoting the ubiquitination and subsequent degradation of ireb2/irp2. Upon high iron and oxygen level, it specifically recognizes and binds ireb2/irp2, promoting its ubiquitination and degradation by the proteasome. The protein is F-box/LRR-repeat protein 5 (fbxl5) of Xenopus tropicalis (Western clawed frog).